A 367-amino-acid chain; its full sequence is tRNA(Ile)-lysidine synthase (367 aa).

32–37 (SGGSDS) provides a ligand contact to ATP.

The protein belongs to the tRNA(Ile)-lysidine synthase family.

The protein localises to the cytoplasm. It carries out the reaction cytidine(34) in tRNA(Ile2) + L-lysine + ATP = lysidine(34) in tRNA(Ile2) + AMP + diphosphate + H(+). Ligates lysine onto the cytidine present at position 34 of the AUA codon-specific tRNA(Ile) that contains the anticodon CAU, in an ATP-dependent manner. Cytidine is converted to lysidine, thus changing the amino acid specificity of the tRNA from methionine to isoleucine. This Hyphomonas neptunium (strain ATCC 15444) protein is tRNA(Ile)-lysidine synthase.